A 153-amino-acid chain; its full sequence is Ribosomal RNA large subunit methyltransferase H (153 aa).

Residues leucine 75, glycine 102, and 121–126 each bind S-adenosyl-L-methionine; that span reads LSKLTL.

Belongs to the RNA methyltransferase RlmH family. In terms of assembly, homodimer.

The protein localises to the cytoplasm. It catalyses the reaction pseudouridine(1915) in 23S rRNA + S-adenosyl-L-methionine = N(3)-methylpseudouridine(1915) in 23S rRNA + S-adenosyl-L-homocysteine + H(+). Functionally, specifically methylates the pseudouridine at position 1915 (m3Psi1915) in 23S rRNA. The polypeptide is Ribosomal RNA large subunit methyltransferase H (Campylobacter jejuni (strain RM1221)).